Here is a 1017-residue protein sequence, read N- to C-terminus: uncharacterized protein (1017 aa).

Positions 1-34 form a signal peptide, tat-type signal; that stretch reads MGNLTMSRRTFVKTAAITGAAAAAFGASTHTALA. A 4Fe-4S Mo/W bis-MGD-type domain is found at 45 to 103; the sequence is DTVAVKTCCRGCGKMECGVKVIVQNGRAIRVEGDEGAFQSMGNCCTKSQSSIQAAYHPD. 4 residues coordinate [4Fe-4S] cluster: cysteine 53, cysteine 56, cysteine 61, and cysteine 89. Lysine 91 functions as the Electron donor/acceptor in the catalytic mechanism.

Belongs to the prokaryotic molybdopterin-containing oxidoreductase family. It depends on [4Fe-4S] cluster as a cofactor. Mo-bis(molybdopterin guanine dinucleotide) is required as a cofactor. Post-translationally, predicted to be exported by the Tat system. The position of the signal peptide cleavage has not been experimentally proven.

This is an uncharacterized protein from Eggerthella lenta (strain ATCC 25559 / DSM 2243 / CCUG 17323 / JCM 9979 / KCTC 3265 / NCTC 11813 / VPI 0255 / 1899 B) (Eubacterium lentum).